We begin with the raw amino-acid sequence, 208 residues long: RxLR effector protein Avr1 (208 aa).

Positions M1–A22 are cleaved as a signal peptide. The RxLR-dEER motif lies at R41–R54. The segment at K70–R92 is W1-motif. The interval L93 to F110 is linker region ln1. The interval K111 to F136 is W2-motif. Residues D137–K157 form a Y-motif region. A linker region ln2 region spans residues K158–L170. Positions L170–F208 are T-region.

Belongs to the RxLR effector family. As to quaternary structure, interacts with host exocyst component Sec5.

The protein localises to the secreted. The protein resides in the host cytoplasm. Its subcellular location is the host nucleus. It localises to the host peroxisome. In terms of biological role, secreted effector that acts as an elicitor of hypersensitive response (HR) specifically on plants carrying defense protein R1, through its interaction with this protein. Also acts as a virulence factor that promotes colonization and suppresses cell death induced by CRN2 as well as callose deposition, a hallmark of basal defense. Interacts with host exocyst component Sec5 and thereby disturbs vesicle trafficking, a cellular process that is important for basal defense. By targeting and stabilizing Sec5 in the cytoplasm, the exocyst complex is thus out of balance and not able to mediate the focal secretion of PR-1 and callose. The chain is RxLR effector protein Avr1 from Phytophthora infestans (strain T30-4) (Potato late blight agent).